The chain runs to 98 residues: Integration host factor subunit alpha (98 aa).

The span at 53–69 (DLREKSERPGRNPKTGE) shows a compositional bias: basic and acidic residues. Residues 53–73 (DLREKSERPGRNPKTGEDIPI) are disordered.

It belongs to the bacterial histone-like protein family. In terms of assembly, heterodimer of an alpha and a beta chain.

This protein is one of the two subunits of integration host factor, a specific DNA-binding protein that functions in genetic recombination as well as in transcriptional and translational control. This Aliivibrio fischeri (strain ATCC 700601 / ES114) (Vibrio fischeri) protein is Integration host factor subunit alpha.